The following is a 354-amino-acid chain: 3'-5' exonuclease (354 aa).

The tract at residues Met1–Lys120 is disordered. 3 stretches are compositionally biased toward basic and acidic residues: residues Lys13–Val23, Thr36–Ala50, and Lys71–Pro91. 3 positions are modified to phosphoserine: Ser104, Ser110, and Ser112. Residues Val146–Arg314 enclose the 3'-5' exonuclease domain. Asp163, Glu165, and Asp301 together coordinate Mg(2+).

It belongs to the WRNexo family.

The protein resides in the nucleus. Has exonuclease activity on both single-stranded and duplex templates bearing overhangs, but not blunt ended duplex DNA, and cleaves in a 3'-5' direction. Essential for the formation of DNA replication focal centers. Has an important role in maintaining genome stability. The sequence is that of 3'-5' exonuclease from Drosophila erecta (Fruit fly).